The chain runs to 202 residues: Dephospho-CoA kinase (202 aa).

The DPCK domain maps to Lys6–Leu202. ATP is bound at residue Ser14–Glu19.

This sequence belongs to the CoaE family.

It is found in the cytoplasm. The enzyme catalyses 3'-dephospho-CoA + ATP = ADP + CoA + H(+). It participates in cofactor biosynthesis; coenzyme A biosynthesis; CoA from (R)-pantothenate: step 5/5. Functionally, catalyzes the phosphorylation of the 3'-hydroxyl group of dephosphocoenzyme A to form coenzyme A. In Chlamydia abortus (strain DSM 27085 / S26/3) (Chlamydophila abortus), this protein is Dephospho-CoA kinase.